We begin with the raw amino-acid sequence, 383 residues long: 8-amino-7-oxononanoate synthase (383 aa).

Arg-23 contacts substrate. 110–111 contributes to the pyridoxal 5'-phosphate binding site; the sequence is GF. Residue His-135 coordinates substrate. Residues Ser-181, His-209, and Thr-235 each contribute to the pyridoxal 5'-phosphate site. Position 238 is an N6-(pyridoxal phosphate)lysine (Lys-238). A substrate-binding site is contributed by Thr-351.

Belongs to the class-II pyridoxal-phosphate-dependent aminotransferase family. BioF subfamily. As to quaternary structure, homodimer. Requires pyridoxal 5'-phosphate as cofactor.

The enzyme catalyses 6-carboxyhexanoyl-[ACP] + L-alanine + H(+) = (8S)-8-amino-7-oxononanoate + holo-[ACP] + CO2. Its pathway is cofactor biosynthesis; biotin biosynthesis. In terms of biological role, catalyzes the decarboxylative condensation of pimeloyl-[acyl-carrier protein] and L-alanine to produce 8-amino-7-oxononanoate (AON), [acyl-carrier protein], and carbon dioxide. The protein is 8-amino-7-oxononanoate synthase of Aliivibrio salmonicida (strain LFI1238) (Vibrio salmonicida (strain LFI1238)).